The primary structure comprises 218 residues: uncharacterized protein (218 aa).

The 83-residue stretch at 111–193 (NSIYLVEGDF…ITKVIEIKAA (83 aa)) folds into the Toprim domain.

This is an uncharacterized protein from Mycoplasma genitalium (strain ATCC 33530 / DSM 19775 / NCTC 10195 / G37) (Mycoplasmoides genitalium).